A 625-amino-acid chain; its full sequence is DELLA protein SLR1 (625 aa).

Residues 1 to 34 (MKREYQEAGGSSGGGSSADMGSCKDKVMAGAAGE) form a disordered region. The short motif at 39 to 43 (DELLA) is the DELLA motif element. The interval 167–208 (TADPSAADSARDTKRMRTGGGSTSSSSSSSSSLGGGASRGSV) is disordered. Residues 189 to 198 (TSSSSSSSSS) are compositionally biased toward low complexity. Positions 232–621 (VDTQEAGIRL…RPLIATSAWR (390 aa)) constitute a GRAS domain. The tract at residues 239–294 (IRLVHALLACAEAVQQENFAAAEALVKQIPTLAASQGGAMRKVAAYFGEALARRVY) is leucine repeat I (LRI). The required for possible homodimerization stretch occupies residues 241–278 (LVHALLACAEAVQQENFAAAEALVKQIPTLAASQGGAM). The short motif at 246-250 (LACAE) is the LxCxE motif element. The segment at 313 to 378 (HAHFYESCPY…GGPPSFRLTG (66 aa)) is VHIID. The VHIID motif lies at 344–348 (VHVVD). Positions 392–431 (QVGWKLAQFAHTIRVDFQYRGLVAATLADLEPFMLQPEGE) are leucine repeat II (LRII). The tract at residues 441 to 542 (IAVNSVFELH…EVYLGRQICN (102 aa)) is PFYRE. The LXXLL motif motif lies at 449-453 (LHRLL). An SAW region spans residues 545–621 (ACEGAERTER…RPLIATSAWR (77 aa)).

It belongs to the GRAS family. DELLA subfamily.

Its function is as follows. Probable transcriptional regulator that acts as a repressor of the gibberellin (GA) signaling pathway. Probably acts by participating in large multiprotein complexes that repress transcription of GA-inducible genes. Upon GA application, it is degraded by the proteasome, allowing the GA signaling pathway. In contrast, its overexpression prevents the GA signaling pathway and induces a dwarf phenotype. This is DELLA protein SLR1 from Oryza sativa subsp. indica (Rice).